The primary structure comprises 220 residues: Small ribosomal subunit protein eS1 (220 aa).

It belongs to the eukaryotic ribosomal protein eS1 family.

The protein is Small ribosomal subunit protein eS1 of Methanococcus vannielii (strain ATCC 35089 / DSM 1224 / JCM 13029 / OCM 148 / SB).